The following is a 505-amino-acid chain: Glycerol kinase (505 aa).

An ADP-binding site is contributed by T15. ATP contacts are provided by T15, T16, and S17. Residue T15 participates in sn-glycerol 3-phosphate binding. R19 provides a ligand contact to ADP. Positions 85, 86, 136, and 249 each coordinate sn-glycerol 3-phosphate. Positions 85, 86, 136, 249, and 250 each coordinate glycerol. Positions 271 and 314 each coordinate ADP. The ATP site is built by T271, G314, Q318, and G415. ADP is bound by residues G415 and N419.

The protein belongs to the FGGY kinase family.

The catalysed reaction is glycerol + ATP = sn-glycerol 3-phosphate + ADP + H(+). It participates in polyol metabolism; glycerol degradation via glycerol kinase pathway; sn-glycerol 3-phosphate from glycerol: step 1/1. Inhibited by fructose 1,6-bisphosphate (FBP). In terms of biological role, key enzyme in the regulation of glycerol uptake and metabolism. Catalyzes the phosphorylation of glycerol to yield sn-glycerol 3-phosphate. The protein is Glycerol kinase of Mycoplasma mycoides subsp. mycoides SC (strain CCUG 32753 / NCTC 10114 / PG1).